Reading from the N-terminus, the 208-residue chain is Protein IncB (208 aa).

Functionally, this protein is thought to be cis acting and to contain the putative attachment site on the DNA for the cellular partition apparatus. The sequence is that of Protein IncB (incB) from Escherichia coli.